The chain runs to 229 residues: MGCFHSREPTATGKTKKEEPTSAVKTNKEEKSSNYVSEPTTMEKIKKDDVYTIILIGDQATGKSSVLQRFKNNQFEVCHKPSPIIIDCFTKKIQIEGKKISLKCYDTAGQEKFRALSQSYYRCADGIMLFYDIANQKTFDNVGRWLEEVHRLAGPNVPILIIANKCDLNEKRVVNFNNAKKFADDKNIPIIEVSAKESLGVEEAFIKLASEINKTWKPLPDNETVTIGM.

Positions 1–39 (MGCFHSREPTATGKTKKEEPTSAVKTNKEEKSSNYVSEP) are disordered. A lipid anchor (N-myristoyl glycine) is attached at G2. C3 is lipidated: S-palmitoyl cysteine. A compositionally biased stretch (basic and acidic residues) spans 15 to 32 (TKKEEPTSAVKTNKEEKS). Residue 57-64 (GDQATGKS) coordinates GTP. The Effector region motif lies at 79–88 (HKPSPIIIDC). Residues 106 to 110 (DTAGQ) and 164 to 167 (NKCD) contribute to the GTP site.

The protein belongs to the small GTPase superfamily. Rab family. Post-translationally, although this sequence lacks the C-terminal cysteine motifs subject to isoprenylation in other Rab proteins, it does have N-terminal myristoylation and S-palmitoylation sequence motifs.

The chain is Ras-related protein RabZ (rabZ) from Dictyostelium discoideum (Social amoeba).